Reading from the N-terminus, the 111-residue chain is Large ribosomal subunit protein uL23 (111 aa).

Belongs to the universal ribosomal protein uL23 family. Part of the 50S ribosomal subunit. Contacts protein L29, and trigger factor when it is bound to the ribosome.

Its function is as follows. One of the early assembly proteins it binds 23S rRNA. One of the proteins that surrounds the polypeptide exit tunnel on the outside of the ribosome. Forms the main docking site for trigger factor binding to the ribosome. The sequence is that of Large ribosomal subunit protein uL23 from Chlamydia felis (strain Fe/C-56) (Chlamydophila felis).